Consider the following 156-residue polypeptide: Small ribosomal subunit protein uS7 (156 aa).

The protein belongs to the universal ribosomal protein uS7 family. As to quaternary structure, part of the 30S ribosomal subunit. Contacts proteins S9 and S11.

In terms of biological role, one of the primary rRNA binding proteins, it binds directly to 16S rRNA where it nucleates assembly of the head domain of the 30S subunit. Is located at the subunit interface close to the decoding center, probably blocks exit of the E-site tRNA. In Cupriavidus necator (strain ATCC 17699 / DSM 428 / KCTC 22496 / NCIMB 10442 / H16 / Stanier 337) (Ralstonia eutropha), this protein is Small ribosomal subunit protein uS7.